The chain runs to 216 residues: Thiopurine S-methyltransferase (216 aa).

W10, L45, E66, and R123 together coordinate S-adenosyl-L-methionine.

It belongs to the class I-like SAM-binding methyltransferase superfamily. TPMT family.

Its subcellular location is the cytoplasm. It carries out the reaction S-adenosyl-L-methionine + a thiopurine = S-adenosyl-L-homocysteine + a thiopurine S-methylether.. The polypeptide is Thiopurine S-methyltransferase (Pseudomonas putida (strain ATCC 700007 / DSM 6899 / JCM 31910 / BCRC 17059 / LMG 24140 / F1)).